Reading from the N-terminus, the 476-residue chain is Bifunctional protein HldE (476 aa).

Positions 1–318 are ribokinase; sequence MKLDLTVLEQ…YTALHGDKLA (318 aa). 195-198 contacts ATP; the sequence is NLGE. The active site involves D264. A cytidylyltransferase region spans residues 344–476; sequence MTNGCFDILH…MIDTILDREG (133 aa).

It in the N-terminal section; belongs to the carbohydrate kinase PfkB family. In the C-terminal section; belongs to the cytidylyltransferase family. In terms of assembly, homodimer.

The enzyme catalyses D-glycero-beta-D-manno-heptose 7-phosphate + ATP = D-glycero-beta-D-manno-heptose 1,7-bisphosphate + ADP + H(+). The catalysed reaction is D-glycero-beta-D-manno-heptose 1-phosphate + ATP + H(+) = ADP-D-glycero-beta-D-manno-heptose + diphosphate. The protein operates within nucleotide-sugar biosynthesis; ADP-L-glycero-beta-D-manno-heptose biosynthesis; ADP-L-glycero-beta-D-manno-heptose from D-glycero-beta-D-manno-heptose 7-phosphate: step 1/4. It participates in nucleotide-sugar biosynthesis; ADP-L-glycero-beta-D-manno-heptose biosynthesis; ADP-L-glycero-beta-D-manno-heptose from D-glycero-beta-D-manno-heptose 7-phosphate: step 3/4. Its function is as follows. Catalyzes the phosphorylation of D-glycero-D-manno-heptose 7-phosphate at the C-1 position to selectively form D-glycero-beta-D-manno-heptose-1,7-bisphosphate. Functionally, catalyzes the ADP transfer from ATP to D-glycero-beta-D-manno-heptose 1-phosphate, yielding ADP-D-glycero-beta-D-manno-heptose. In Chromohalobacter salexigens (strain ATCC BAA-138 / DSM 3043 / CIP 106854 / NCIMB 13768 / 1H11), this protein is Bifunctional protein HldE.